We begin with the raw amino-acid sequence, 235 residues long: Eukaryotic translation initiation factor 4E-1 (235 aa).

Basic and acidic residues predominate over residues 1–16 (MAVEDTPKSVVTEEAK). Positions 1 to 59 (MAVEDTPKSVVTEEAKPNSIENPIDRYHEEGDDAEEGEIAGGEGDGNVDESSKSGVPES) are disordered. 2 EIF4G-binding regions span residues 60–63 (HPLE) and 70–106 (FDNPAVKSKQTSWGSSLRPVFTFSTVEEFWSLYNNMK). Residues 78–83 (KQTSWG), lysine 110, and 128–129 (WE) contribute to the mRNA site. Cysteine 133 and cysteine 171 are joined by a disulfide. Residues 154–163 (YTLLALIGEQ) are EIF4G-binding. MRNA-binding positions include 178 to 183 (RGKQER) and 223 to 227 (KKLDR).

It belongs to the eukaryotic initiation factor 4E family. In terms of assembly, EIF4F is a multi-subunit complex, the composition of which varies with external and internal environmental conditions. It is composed of at least EIF4A, EIF4E and EIF4G. EIF4E is also known to interact with other partners. In higher plants two isoforms of EIF4F have been identified, named isoform EIF4F and isoform EIF(iso)4F. Isoform EIF4F has subunits p220 and p26, whereas isoform EIF(iso)4F has subunits p82 and p28. Interacts directly with EXA1. (Microbial infection) Interacts with viral genome-linked protein (VPg); this interaction is possible in susceptible hosts but impaired in resistant plants. In terms of processing, according to the redox status, the Cys-133-Cys-171 disulfide bridge may have a role in regulating protein function by affecting its ability to bind capped mRNA. In terms of tissue distribution, expressed in all tissues except in the cells of the specialization zone of the roots.

It localises to the nucleus. Its subcellular location is the cytoplasm. Functionally, component of the protein complex eIF4F, which is involved in the recognition of the mRNA cap, ATP-dependent unwinding of 5'-terminal secondary structure and recruitment of mRNA to the ribosome. Recognizes and binds the 7-methylguanosine-containing mRNA cap during an early step in the initiation of protein synthesis and facilitates ribosome binding by inducing the unwinding of the mRNAs secondary structures. Key component of recessive resistance to potyviruses. In terms of biological role, (Microbial infection) Susceptibility host factor required for viral infection by recruiting viral RNAs to the host ribosomal complex via an interaction with viral genome-linked protein (VPg). The sequence is that of Eukaryotic translation initiation factor 4E-1 from Arabidopsis thaliana (Mouse-ear cress).